A 164-amino-acid polypeptide reads, in one-letter code: Monothiol glutaredoxin-S10 (164 aa).

A Glutaredoxin domain is found at 60-161 (EDSVKRTLAD…TMLSELDIDV (102 aa)). Cysteine 80 contacts [2Fe-2S] cluster.

This sequence belongs to the glutaredoxin family. CPYC subfamily.

It is found in the cytoplasm. May only reduce GSH-thiol disulfides, but not protein disulfides. The protein is Monothiol glutaredoxin-S10 (GRXS10) of Oryza sativa subsp. japonica (Rice).